A 548-amino-acid polypeptide reads, in one-letter code: Glutamate--tRNA ligase (548 aa).

A 'HIGH' region motif is present at residues 102–112 (PSPSGPLHIGH).

The protein belongs to the class-I aminoacyl-tRNA synthetase family. Glutamate--tRNA ligase type 2 subfamily.

The protein resides in the cytoplasm. It carries out the reaction tRNA(Glu) + L-glutamate + ATP = L-glutamyl-tRNA(Glu) + AMP + diphosphate. Catalyzes the attachment of glutamate to tRNA(Glu) in a two-step reaction: glutamate is first activated by ATP to form Glu-AMP and then transferred to the acceptor end of tRNA(Glu). The sequence is that of Glutamate--tRNA ligase from Thermoplasma volcanium (strain ATCC 51530 / DSM 4299 / JCM 9571 / NBRC 15438 / GSS1).